Here is a 606-residue protein sequence, read N- to C-terminus: MGLSISHSMKNIRNFSIIAHIDHGKSTIADRFIQICGGLSKREMAQQVLDSMDLERERGITIKAQSVSLNYCGRNGEVYHLNFIDTPGHVDFSYEVSRSLAACEGALLVVDASQGVEAQSVANCYTAIEQGLEVVPVLNKIDLPSAEPERVCQEIEEIIGLDASDALQVSAKTGQGIEELLAALVARVPPPQGDPASPLRALIIDSWFDNYLGVISLVRVVDGCLKPKDKIKIMSTGQHYRVEKAGLFTPKRREVEQLLTGGVGYIIAGIKDVDGAPVGDTVTHVEQFATKALPGFKAVKPQVFAGLFPVDSDDYEDLREALAKLRLNDAALFYEPETSQALGFGFRCGFLGMLHMEIIQERLEREYSLNLITTAPTVVYQVLTSKGEVLRIDNPSILPEPGQVAEVREPIIQADILVPQQYVGAVIGLCEEKRGTQKQLQYLGNQISLNYELPLSEVVLDFFERLKSVSRGYASLDYHFSRFQSADLVKLDLLINGERVDALSLIVHRNQAHYRGRELAEKMRELIPRQLFDVAIQAAIGAHIVARTTVKALRKNVTAKCYGGDITRKRKLLEKQKAGKKRMKQVGSVEIPQEAFLAVLKVGKKP.

The tr-type G domain maps to Lys10–Gln192. GTP is bound by residues Asp22–Thr27 and Asn139–Asp142.

Belongs to the TRAFAC class translation factor GTPase superfamily. Classic translation factor GTPase family. LepA subfamily.

The protein resides in the cell inner membrane. It catalyses the reaction GTP + H2O = GDP + phosphate + H(+). Its function is as follows. Required for accurate and efficient protein synthesis under certain stress conditions. May act as a fidelity factor of the translation reaction, by catalyzing a one-codon backward translocation of tRNAs on improperly translocated ribosomes. Back-translocation proceeds from a post-translocation (POST) complex to a pre-translocation (PRE) complex, thus giving elongation factor G a second chance to translocate the tRNAs correctly. Binds to ribosomes in a GTP-dependent manner. This is Elongation factor 4 from Nitrosococcus oceani (strain ATCC 19707 / BCRC 17464 / JCM 30415 / NCIMB 11848 / C-107).